Here is a 124-residue protein sequence, read N- to C-terminus: PEP-dependent dihydroxyacetone kinase 1, phosphoryl donor subunit DhaM (124 aa).

One can recognise a PTS EIIA type-4 domain in the interval 4–124 (PYGVVIISHS…AANLKTIEIK (121 aa)). Histidine 12 functions as the Tele-phosphohistidine intermediate in the catalytic mechanism.

This sequence belongs to the PEP-utilizing enzyme family. Homodimer. The dihydroxyacetone kinase complex is composed of a homodimer of DhaM, a homodimer of DhaK and the subunit DhaL.

It is found in the cytoplasm. It catalyses the reaction dihydroxyacetone + phosphoenolpyruvate = dihydroxyacetone phosphate + pyruvate. Functionally, component of the dihydroxyacetone kinase complex, which is responsible for the phosphoenolpyruvate (PEP)-dependent phosphorylation of dihydroxyacetone. DhaM serves as the phosphoryl donor. Is phosphorylated by phosphoenolpyruvate in an EI- and HPr-dependent reaction, and a phosphorelay system on histidine residues finally leads to phosphoryl transfer to DhaL and dihydroxyacetone. The polypeptide is PEP-dependent dihydroxyacetone kinase 1, phosphoryl donor subunit DhaM (Listeria innocua serovar 6a (strain ATCC BAA-680 / CLIP 11262)).